Reading from the N-terminus, the 249-residue chain is Probable transcriptional regulatory protein HY04AAS1_0501 (249 aa).

The protein belongs to the TACO1 family.

Its subcellular location is the cytoplasm. The polypeptide is Probable transcriptional regulatory protein HY04AAS1_0501 (Hydrogenobaculum sp. (strain Y04AAS1)).